A 591-amino-acid chain; its full sequence is MRSHYCGDINQSHLGQEVTLVGWVNRSRDLGGVVFLDLRDREGLVQVVYDPDLKDVFEMASTLRSEFCVQIKGVVRARPESQINSQMKTGEIEILGKQLTIINASAPLPLSMDNYQNNSEEQRLKYRYLDLRRPEMAERLIFRAKVTSSVRRFLDGNGFLDIETPILTKATPEGARDYLVPSRTYKGQFFALPQSPQLFKQLLMMSGFDRYYQIVKCFRDEDLRADRQPEFTQIDIETSFMSAEQVMEKTEQMMRGLFQDLLNVDLGDFPRMTYAEAMKRYGSDKPDLRNPLELVDIADLVKDVEFAVFNGPANDVEGRVAALRIPTGASLSRKQIDDYTKFAGIYGAKGLAWMKINDLAAGMDGIQSPVLKFLTESIVNDIISRTGAQTGDIILFGADKANVVAEALGALRLKAGEDFKLLEGEWRPMWVVDFPMFEKINGGFHAVHHPFTAPRGISPAELAADPAAAISDAYDMVLNGCELGGGSVRIHNAEMQSTVFSILGIEAEEAQEKFGFLLEALRYGTPPHAGLAFGLDRIIMLMTGASSIRDVMAFPKTTTAACPLTNAPGFANPVQLTELGIAVIEKVKTEE.

Glutamate 173 is a binding site for L-aspartate. Residues 197 to 200 (QLFK) form an aspartate region. An L-aspartate-binding site is contributed by arginine 219. ATP contacts are provided by residues 219 to 221 (RDE) and glutamine 228. Histidine 448 provides a ligand contact to L-aspartate. An ATP-binding site is contributed by glutamate 482. Position 489 (arginine 489) interacts with L-aspartate. 534–537 (GLDR) serves as a coordination point for ATP.

The protein belongs to the class-II aminoacyl-tRNA synthetase family. Type 1 subfamily. Homodimer.

It is found in the cytoplasm. The catalysed reaction is tRNA(Asp) + L-aspartate + ATP = L-aspartyl-tRNA(Asp) + AMP + diphosphate. Functionally, catalyzes the attachment of L-aspartate to tRNA(Asp) in a two-step reaction: L-aspartate is first activated by ATP to form Asp-AMP and then transferred to the acceptor end of tRNA(Asp). The chain is Aspartate--tRNA ligase from Shewanella frigidimarina (strain NCIMB 400).